The chain runs to 163 residues: Lipoprotein signal peptidase (163 aa).

3 helical membrane-spanning segments follow: residues 11–31 (ILIAVFVVIFDQVTKYIIATT), 63–83 (KMTFFFIITIIILIALVYFFI), and 88–108 (YNLFMQVAISLLFAGALGNFI). Catalysis depends on residues D118 and D136. The chain crosses the membrane as a helical span at residues 131 to 151 (IFNIADSSLTIGVILIIIALL).

This sequence belongs to the peptidase A8 family.

Its subcellular location is the cell membrane. It carries out the reaction Release of signal peptides from bacterial membrane prolipoproteins. Hydrolyzes -Xaa-Yaa-Zaa-|-(S,diacylglyceryl)Cys-, in which Xaa is hydrophobic (preferably Leu), and Yaa (Ala or Ser) and Zaa (Gly or Ala) have small, neutral side chains.. It participates in protein modification; lipoprotein biosynthesis (signal peptide cleavage). Its function is as follows. This protein specifically catalyzes the removal of signal peptides from prolipoproteins. This is Lipoprotein signal peptidase from Staphylococcus aureus.